Reading from the N-terminus, the 47-residue chain is Large ribosomal subunit protein bL33C (47 aa).

This sequence belongs to the bacterial ribosomal protein bL33 family.

This Staphylococcus epidermidis (strain ATCC 35984 / DSM 28319 / BCRC 17069 / CCUG 31568 / BM 3577 / RP62A) protein is Large ribosomal subunit protein bL33C.